Consider the following 96-residue polypeptide: Cysteine protease immunity 1 (96 aa).

This Escherichia coli O1:K1:H7 (strain ATCC 11775 / DSM 30083 / JCM 1649 / NBRC 102203 / NCTC 9001 / U5/41) protein is Cysteine protease immunity 1.